A 608-amino-acid chain; its full sequence is Glutamine--fructose-6-phosphate aminotransferase [isomerizing] (608 aa).

C2 functions as the Nucleophile; for GATase activity in the catalytic mechanism. The Glutamine amidotransferase type-2 domain occupies 2 to 217 (CGIVGIVGNQ…DGDWAVIGKT (216 aa)). SIS domains follow at residues 281–422 (ISDA…ARGT) and 456–598 (LSRE…VDQP). K603 (for Fru-6P isomerization activity) is an active-site residue.

In terms of assembly, homodimer.

Its subcellular location is the cytoplasm. It carries out the reaction D-fructose 6-phosphate + L-glutamine = D-glucosamine 6-phosphate + L-glutamate. Its function is as follows. Catalyzes the first step in hexosamine metabolism, converting fructose-6P into glucosamine-6P using glutamine as a nitrogen source. The sequence is that of Glutamine--fructose-6-phosphate aminotransferase [isomerizing] from Rhizobium meliloti (strain 1021) (Ensifer meliloti).